A 128-amino-acid chain; its full sequence is Large ribosomal subunit protein bL17 (128 aa).

The protein belongs to the bacterial ribosomal protein bL17 family. In terms of assembly, part of the 50S ribosomal subunit. Contacts protein L32.

The chain is Large ribosomal subunit protein bL17 from Haemophilus influenzae (strain 86-028NP).